Consider the following 198-residue polypeptide: Recombination protein RecR (198 aa).

The C4-type zinc finger occupies C57–C72. The Toprim domain occupies S80 to P174.

The protein belongs to the RecR family.

In terms of biological role, may play a role in DNA repair. It seems to be involved in an RecBC-independent recombinational process of DNA repair. It may act with RecF and RecO. This chain is Recombination protein RecR, found in Pseudomonas paraeruginosa (strain DSM 24068 / PA7) (Pseudomonas aeruginosa (strain PA7)).